A 195-amino-acid polypeptide reads, in one-letter code: HTH-type transcriptional regulator BetI (195 aa).

The HTH tetR-type domain maps to 8-68; that stretch reads PIRRQQLIEA…ATMRYLISHL (61 aa). Positions 31–50 form a DNA-binding region, H-T-H motif; sequence SIVQIARRAGVSNGIISHYF.

It functions in the pathway amine and polyamine biosynthesis; betaine biosynthesis via choline pathway [regulation]. Its function is as follows. Repressor involved in the biosynthesis of the osmoprotectant glycine betaine. It represses transcription of the choline transporter BetT and the genes of BetAB involved in the synthesis of glycine betaine. This chain is HTH-type transcriptional regulator BetI, found in Pectobacterium carotovorum subsp. carotovorum (strain PC1).